A 130-amino-acid chain; its full sequence is Large ribosomal subunit protein bL12 (130 aa).

It belongs to the bacterial ribosomal protein bL12 family. As to quaternary structure, homodimer. Part of the ribosomal stalk of the 50S ribosomal subunit. Forms a multimeric L10(L12)X complex, where L10 forms an elongated spine to which 2 to 4 L12 dimers bind in a sequential fashion. Binds GTP-bound translation factors.

Its function is as follows. Forms part of the ribosomal stalk which helps the ribosome interact with GTP-bound translation factors. Is thus essential for accurate translation. The chain is Large ribosomal subunit protein bL12 from Nostoc sp. (strain PCC 7120 / SAG 25.82 / UTEX 2576).